A 1954-amino-acid chain; its full sequence is Chromodomain-helicase-DNA-binding protein 5 (1954 aa).

2 disordered regions span residues 1 to 134 (MRGP…PKSS) and 225 to 338 (PLAV…GDGY). 2 stretches are compositionally biased toward acidic residues: residues 17–37 (EEMENEDEMSEEEDGGLEAFD) and 72–90 (NDELSENEEDLEEKSESEG). Residues 96 to 115 (NKKKKKKLKDKKEKKAKRKK) show a composition bias toward basic residues. Residues 227-237 (AVSPPQVPQPV) are compositionally biased toward pro residues. Basic residues predominate over residues 251-272 (GVRKKIKGSKDGKKKGKGKKTA). Acidic residues predominate over residues 291-301 (SEEDEREESDF). Residues 321 to 330 (KKSKRRRKKK) show a composition bias toward basic residues. PHD-type zinc fingers lie at residues 343-390 (QDYC…CEKE) and 416-463 (MEFC…CTCP). Residues 343–653 (QDYCEVCQQG…HRELMLGEDT (311 aa)) are histone-binding. The Chromo 1 domain maps to 497–554 (LPPPKPLEGIPEREFFVKWAGLSYWHCSWVKELQLELYHTVMYRNYQRKNDMDEPPPF). Residues 549–571 (DEPPPFDYGSGDEDGKSEKRKNK) are disordered. Residues 561–571 (EDGKSEKRKNK) are compositionally biased toward basic and acidic residues. The Chromo 2 domain occupies 592–653 (MMIHRILNHS…HRELMLGEDT (62 aa)). Residues 712–896 (RFSWAQGTDT…FHLLNFLTPE (185 aa)) form the Helicase ATP-binding domain. 725-732 (DEMGLGKT) is a binding site for ATP. Residues 847 to 850 (DEAH) carry the DEAH box motif. The region spanning 1028-1193 (LLQKMLKKLR…MTKQELDDIL (166 aa)) is the Helicase C-terminal domain. Disordered stretches follow at residues 1209–1253 (MSQG…EDSS), 1351–1411 (YNDA…LPPL), 1524–1564 (YSTP…APLG), 1597–1640 (AALD…REEV), and 1658–1696 (SRGDSSELRPDDTKAEEKEPIETQQNGDKEEDDEGKKED). Acidic residues-rich tracts occupy residues 1355–1366 (SQEDQEWQDELS) and 1376–1385 (SEDEDEDFEE). N5-methylglutamine is present on Q1390. S1554 is modified (phosphoserine). Residues 1554-1564 (SPAHLLPAPLG) are compositionally biased toward low complexity. Basic and acidic residues-rich tracts occupy residues 1600-1627 (DRVESEDKHESPASKERAREERPEETEK) and 1658-1678 (SRGDSSELRPDDTKAEEKEPI).

It belongs to the SNF2/RAD54 helicase family. Component of the nucleosome remodeling and deacetylase (NuRD) repressor complex, composed of core proteins MTA1, MTA2, MTA3, RBBP4, RBBP7, HDAC1, HDAC2, MBD2, MBD3, and peripherally associated proteins CDK2AP1, CDK2AP2, GATAD2A, GATAD2B, CHD3, CHD4 and CHD5. The exact stoichiometry of the NuRD complex is unknown, and some subunits such as MBD2 and MBD3, GATAD2A and GATAD2B, and CHD3, CHD4 and CHD5 define mutually exclusive NuRD complexes. Interacts with HDAC2. In terms of processing, methylated at Gln-1390 by N6AMT1. In terms of tissue distribution, preferentially expressed in total brain, fetal brain, and cerebellum. It is also moderately expressed in the adrenal gland and detected in testis.

The protein resides in the nucleus. The protein localises to the chromosome. The enzyme catalyses ATP + H2O = ADP + phosphate + H(+). ATP-dependent chromatin-remodeling factor that binds DNA through histones and regulates gene transcription. May specifically recognize and bind trimethylated 'Lys-27' (H3K27me3) and non-methylated 'Lys-4' of histone H3. Acts as a component of the histone deacetylase NuRD complex which participates in the remodeling of chromatin. Plays a role in the development of the nervous system by activating the expression of genes promoting neuron terminal differentiation. In parallel, it may also positively regulate the trimethylation of histone H3 at 'Lys-27' thereby specifically repressing genes that promote the differentiation into non-neuronal cell lineages. Regulates the expression of genes involved in cell proliferation and differentiation. Downstream activated genes may include CDKN2A that positively regulates the p53/TP53 pathway, which in turn, prevents cell proliferation. In spermatogenesis, it probably regulates histone hyperacetylation and the replacement of histones by transition proteins in chromatin, a crucial step in the condensation of spermatid chromatin and the production of functional spermatozoa. The sequence is that of Chromodomain-helicase-DNA-binding protein 5 from Homo sapiens (Human).